Reading from the N-terminus, the 266-residue chain is Putative carbamate hydrolase RutD (266 aa).

The 225-residue stretch at 15–239 (PVVVLSAGLG…RVEMPWGGHA (225 aa)) folds into the AB hydrolase-1 domain.

This sequence belongs to the AB hydrolase superfamily. Hydrolase RutD family.

It carries out the reaction carbamate + 2 H(+) = NH4(+) + CO2. In terms of biological role, involved in pyrimidine catabolism. May facilitate the hydrolysis of carbamate, a reaction that can also occur spontaneously. The chain is Putative carbamate hydrolase RutD from Klebsiella variicola (strain At-22).